We begin with the raw amino-acid sequence, 446 residues long: D(1A) dopamine receptor (446 aa).

Residues 1-23 (MRTLNTSAMDGTGLVVERDFSVR) lie on the Extracellular side of the membrane. Asparagine 5 is a glycosylation site (N-linked (GlcNAc...) asparagine). A helical membrane pass occupies residues 24–49 (ILTACFLSLLILSTLLGNTLVCAAVI). The Cytoplasmic portion of the chain corresponds to 50–60 (RFRHLRSKVTN). The chain crosses the membrane as a helical span at residues 61–87 (FFVISLAVSDLLVAVLVMPWKAVAEIA). Residues 88-96 (GFWPFGSFC) lie on the Extracellular side of the membrane. Cysteine 96 and cysteine 186 are joined by a disulfide. The chain crosses the membrane as a helical span at residues 97–119 (NIWVAFDIMCSTASILNLCVISV). Residues 120–138 (DRYWAISSPFRYERKMTPK) lie on the Cytoplasmic side of the membrane. Residues 139–163 (AAFILISVAWTLSVLISFIPVQLSW) traverse the membrane as a helical segment. Residues 164 to 192 (HKAKPTSPSDGNATSLAETIDNCDSSLSR) lie on the Extracellular side of the membrane. Residue asparagine 175 is glycosylated (N-linked (GlcNAc...) asparagine). Residues 193-218 (TYAISSSVISFYIPVAIMIVTYTRIY) form a helical membrane-spanning segment. Residues 219-272 (RIAQKQIRRIAALERAAVHAKNCQTTTGNGKPVECSQPESSFKMSFKRETKVLK) lie on the Cytoplasmic side of the membrane. The helical transmembrane segment at 273–299 (TLSVIMGVFVCCWLPFFILNCILPFCG) threads the bilayer. Over 300-312 (SGETQPFCIDSIT) the chain is Extracellular. Residues 313 to 337 (FDVFVWFGWANSSLNPIIYAFNADF) traverse the membrane as a helical segment. The Cytoplasmic portion of the chain corresponds to 338 to 446 (RKAFSTLLGC…PITQNGQHPT (109 aa)). S-palmitoyl cysteine attachment occurs at residues cysteine 347 and cysteine 351.

The protein belongs to the G-protein coupled receptor 1 family. In terms of assembly, interacts with DNAJC14 via its C-terminus. Interacts with DRD2. Interacts with DORIP1.

It is found in the cell membrane. It localises to the endoplasmic reticulum membrane. The protein resides in the cell projection. The protein localises to the cilium membrane. Its subcellular location is the dendrite. It is found in the dendritic spine. Its function is as follows. Dopamine receptor whose activity is mediated by G proteins which activate adenylyl cyclase. This chain is D(1A) dopamine receptor (DRD1), found in Macaca mulatta (Rhesus macaque).